The primary structure comprises 1622 residues: ABC transporter C family member 1 (1622 aa).

Helical transmembrane passes span 37–57 (FVLG…LWLI), 73–93 (FSYF…FRLV), 110–130 (EAFM…MTVV), 145–165 (FAVI…LSVK), 174–194 (YLYI…FVYF), 336–356 (AWIG…GVLC), 440–460 (VASI…TVII), 527–547 (FILN…FSLL), and 557–577 (FTSL…PNII). Positions 302-582 (FWWGGFWKIG…LPNIITQMVN (281 aa)) constitute an ABC transmembrane type-1 1 domain. Positions 614–838 (ISIRNGYFSW…GPLFQRLMEN (225 aa)) constitute an ABC transporter 1 domain. ATP is bound at residue 649-656 (GSTGEGKT). The segment at 852-876 (AEVDQTSVKPVENGNANNLQKDGIE) is disordered. Residues 855 to 871 (DQTSVKPVENGNANNLQ) are compositionally biased toward polar residues. 6 helical membrane passes run 909 to 929 (ALGG…TQVF), 951 to 971 (PLFY…VTLI), 1027 to 1049 (AVFV…LIGI), 1053 to 1072 (LSLW…YLYY), 1138 to 1158 (LGIR…SLAV), and 1172 to 1192 (STMG…TAVL). In terms of domain architecture, ABC transmembrane type-1 2 spans 916–1200 (VMMLVICYVL…VLRLASLAEN (285 aa)). Residues 1231–1246 (WPSSGSIKFEDVVLRY) form an interaction with calmodulin and FKP42/TWD1 region. The 235-residue stretch at 1237–1471 (IKFEDVVLRY…GESSFSKMVQ (235 aa)) folds into the ABC transporter 2 domain. 1271-1278 (GRTGAGKS) contributes to the ATP binding site.

It belongs to the ABC transporter superfamily. ABCC family. Conjugate transporter (TC 3.A.1.208) subfamily. Interacts with calmodulin (CaM), PAS1 and FKBP42/TWD1. In terms of tissue distribution, ubiquitous, with higher levels in leaves and stems and lower levels in roots. Localized in the root apex, root hair tips and root epidermis.

The protein resides in the vacuole membrane. The enzyme catalyses ATP + H2O + xenobioticSide 1 = ADP + phosphate + xenobioticSide 2.. Pump for glutathione S-conjugates. Mediates the transport of S-(2,4-dinitrophenyl)-glutathione (DNP-GS), GSSG, cyanidin 3-glucoside-GS (C3G-GS) and metolachlor-GS (MOC-GS). This Arabidopsis thaliana (Mouse-ear cress) protein is ABC transporter C family member 1 (ABCC1).